We begin with the raw amino-acid sequence, 594 residues long: Cytoplasmic polyadenylation element-binding protein 1 (594 aa).

Residues 1–33 form a disordered region; that stretch reads MQHQVKACGDSKSTTRSLQGNRRSGAASLKKPS. The span at 11–22 shows a compositional bias: polar residues; the sequence is SKSTTRSLQGNR. RRM domains lie at 257–364 and 381–452; these read RKVF…PWRL and RTVF…HAET. Residues 519–560 are disordered; that stretch reads TGDQTRILPRPPHHQSSHYSPRSHQMMNHDSMESSNQSRGNT. A compositionally biased stretch (polar residues) spans 535–560; that stretch reads SHYSPRSHQMMNHDSMESSNQSRGNT.

As to quaternary structure, interacts with fbf-1.

Cytoplasmic polyadenylation element binding protein that binds to and regulates the translation of specific mRNAs. Essential for progression through meiosis. Involved in spermatogenesis. The chain is Cytoplasmic polyadenylation element-binding protein 1 (cpb-1) from Caenorhabditis remanei (Caenorhabditis vulgaris).